A 223-amino-acid polypeptide reads, in one-letter code: Thymidylate kinase (223 aa).

7–14 (GIDGAGKS) contacts ATP.

This sequence belongs to the thymidylate kinase family.

It catalyses the reaction dTMP + ATP = dTDP + ADP. Phosphorylation of dTMP to form dTDP in both de novo and salvage pathways of dTTP synthesis. The polypeptide is Thymidylate kinase (Prosthecochloris aestuarii (strain DSM 271 / SK 413)).